Consider the following 165-residue polypeptide: Phosphopantetheine adenylyltransferase (165 aa).

Ser10 contacts substrate. ATP is bound by residues 10–11 (SF) and His18. Residues Lys42, Thr79, and Arg93 each contribute to the substrate site. Residues 94 to 96 (GLR), Glu104, and 129 to 135 (VRPITAT) contribute to the ATP site.

Belongs to the bacterial CoaD family. In terms of assembly, homohexamer. Mg(2+) serves as cofactor.

It is found in the cytoplasm. It carries out the reaction (R)-4'-phosphopantetheine + ATP + H(+) = 3'-dephospho-CoA + diphosphate. It participates in cofactor biosynthesis; coenzyme A biosynthesis; CoA from (R)-pantothenate: step 4/5. Its function is as follows. Reversibly transfers an adenylyl group from ATP to 4'-phosphopantetheine, yielding dephospho-CoA (dPCoA) and pyrophosphate. The polypeptide is Phosphopantetheine adenylyltransferase (Rhodopseudomonas palustris (strain BisA53)).